A 394-amino-acid chain; its full sequence is Phosphopentomutase (394 aa).

Residues D13, D286, H291, D327, H328, and H339 each coordinate Mn(2+).

Belongs to the phosphopentomutase family. It depends on Mn(2+) as a cofactor.

The protein resides in the cytoplasm. The enzyme catalyses 2-deoxy-alpha-D-ribose 1-phosphate = 2-deoxy-D-ribose 5-phosphate. The catalysed reaction is alpha-D-ribose 1-phosphate = D-ribose 5-phosphate. The protein operates within carbohydrate degradation; 2-deoxy-D-ribose 1-phosphate degradation; D-glyceraldehyde 3-phosphate and acetaldehyde from 2-deoxy-alpha-D-ribose 1-phosphate: step 1/2. In terms of biological role, isomerase that catalyzes the conversion of deoxy-ribose 1-phosphate (dRib-1-P) and ribose 1-phosphate (Rib-1-P) to deoxy-ribose 5-phosphate (dRib-5-P) and ribose 5-phosphate (Rib-5-P), respectively. The protein is Phosphopentomutase of Bacillus cereus (strain AH187).